A 57-amino-acid chain; its full sequence is Beta-defensin 3 (57 aa).

The residue at position 16 (glutamine 16) is a Pyrrolidone carboxylic acid. 3 disulfides stabilise this stretch: cysteine 24–cysteine 53, cysteine 31–cysteine 46, and cysteine 36–cysteine 54.

Belongs to the beta-defensin family. In terms of tissue distribution, neutrophilic granules.

It localises to the secreted. In terms of biological role, has bactericidal activity. Active against E.coli ML35 and S.aureus 502A. The polypeptide is Beta-defensin 3 (DEFB3) (Bos taurus (Bovine)).